We begin with the raw amino-acid sequence, 1659 residues long: Daxx-like protein (1659 aa).

Disordered regions lie at residues 1–25 (MSASVICVDLSSESDEESPAKRRRL) and 265–336 (QLQQ…VRSL). The stretch at 438 to 469 (LGQLQQEQQKILGQLQQQKQQQQQQQKKILGQ) forms a coiled coil. 3 stretches are compositionally biased toward low complexity: residues 506–520 (SVGQLQQQQPHQSQQ), 528–542 (KQQPQQQKKISVGQF), and 600–625 (GQLQRQTQQQQKTSAGQFQQQPQQQQ). 7 disordered regions span residues 506–542 (SVGQLQQQQPHQSQQKNSMVHVKQQPQQQKKISVGQF), 600–645 (GQLQ…TLAG), 658–713 (SAGQ…MPQK), 872–894 (TLPFRSSQRKTSEAPMTSTHVQG), 924–952 (LPPTTSITPQLTPTTTPPPAGPSAAVQQQ), 1023–1060 (VESPPTTPPTDKPEPERGPMTVEKSSIKPMATDKQSRA), and 1536–1555 (FKIADDGDDSEEESDSEDDD). The segment covering 626–635 (KISAGQLQEH) has biased composition (polar residues). Composition is skewed to low complexity over residues 636–645 (SQQQQKTLAG) and 658–698 (SAGQ…QPQQ). Polar residues-rich tracts occupy residues 699 to 711 (RTSAGLLQQQQMP) and 885 to 894 (APMTSTHVQG). Residues 870–1659 (ARTLPFRSSQ…DQIIISDEES (790 aa)) form a necessary for interaction with His3.3A and His3.3B region. The segment covering 924 to 937 (LPPTTSITPQLTPT) has biased composition (low complexity). Positions 1541–1555 (DGDDSEEESDSEDDD) are enriched in acidic residues.

As to quaternary structure, interacts with p53 (via C-terminus). Interacts (via C-terminus) with His3.3A and His3.3B. Interacts with asf1. As to expression, ubiquitously expressed with higher levels in the head (at protein level). Expressed in the germ line, with prominent expression in primary spermatocytes and meiotic spermatocytes (at protein level). In ovaries, expressed in nurse cells and in the germinal vesicle of the ovarian follicle at stage 10 (at protein level).

The protein resides in the cytoplasm. The protein localises to the cytosol. Its subcellular location is the nucleus. It is found in the chromosome. Functionally, transcription regulator. Acts as a histone chaperone that facilitates deposition of histone H3.3. Has a role in chromatin remodeling together with asf1 and XNP. Has role in the transcriptional apoptotic response to oxidative and UV stress. The polypeptide is Daxx-like protein (Drosophila melanogaster (Fruit fly)).